Reading from the N-terminus, the 92-residue chain is uncharacterized protein (92 aa).

This is an uncharacterized protein from Homo sapiens (Human).